Consider the following 316-residue polypeptide: Pleckstrin homology domain-containing family F member 1 homolog (316 aa).

One can recognise a PH domain in the interval 35–131 (VLVGEGVLTK…WMAHINKCVE (97 aa)). The FYVE-type zinc-finger motif lies at 152-212 (DTDASVCMHC…VCDACYERLK (61 aa)). Zn(2+) is bound by residues C158, C161, C175, C178, C183, C186, C204, and C207. The interval 215–316 (PSSLGSGEDS…AAVATTGSHC (102 aa)) is disordered. Residues 244–253 (SNDEDSDEET) show a composition bias toward acidic residues. Low complexity predominate over residues 279–292 (SSTITSPSSATTGS). The segment covering 298–316 (VTPSVQSSPAAVATTGSHC) has biased composition (polar residues).

As to quaternary structure, interacts with Gdi (Rab GDP dissociation inhibitor). In terms of tissue distribution, in ovaries, expressed both in the germ line cells and in the overlying somatic follicular epithelium.

It is found in the apical cell membrane. Its subcellular location is the endosome membrane. The protein resides in the cytoplasm. It localises to the cell cortex. In terms of biological role, functions in the regulation of endosome morphology and late endosome formation. Has a role in controlling trafficking from early to late endosomes and from late endosomes to lysosomes. Important for localization of Gdi to the endosomal membranes. May function in controlling the activity of multiple regulators in the endocytic pathway, perhaps by positively controlling those involved in the early steps of endocytosis such as Rab5 and hrs, and negative regulating those involved in the late stages of endocytosis like car and VhaSFD. The protein is Pleckstrin homology domain-containing family F member 1 homolog of Drosophila melanogaster (Fruit fly).